Reading from the N-terminus, the 84-residue chain is Cell division topological specificity factor (84 aa).

Belongs to the MinE family.

Prevents the cell division inhibition by proteins MinC and MinD at internal division sites while permitting inhibition at polar sites. This ensures cell division at the proper site by restricting the formation of a division septum at the midpoint of the long axis of the cell. In Rhodopseudomonas palustris (strain BisA53), this protein is Cell division topological specificity factor.